Consider the following 361-residue polypeptide: Nicotinate-nucleotide--dimethylbenzimidazole phosphoribosyltransferase (361 aa).

The Proton acceptor role is filled by Glu-315.

The protein belongs to the CobT family.

It carries out the reaction 5,6-dimethylbenzimidazole + nicotinate beta-D-ribonucleotide = alpha-ribazole 5'-phosphate + nicotinate + H(+). It participates in nucleoside biosynthesis; alpha-ribazole biosynthesis; alpha-ribazole from 5,6-dimethylbenzimidazole: step 1/2. Catalyzes the synthesis of alpha-ribazole-5'-phosphate from nicotinate mononucleotide (NAMN) and 5,6-dimethylbenzimidazole (DMB). The polypeptide is Nicotinate-nucleotide--dimethylbenzimidazole phosphoribosyltransferase (Clostridium perfringens (strain ATCC 13124 / DSM 756 / JCM 1290 / NCIMB 6125 / NCTC 8237 / Type A)).